The following is a 1015-amino-acid chain: Probable beta-galactosidase B (1015 aa).

An N-terminal signal peptide occupies residues 1 to 21; it reads MAHIYRLLLLLLSNLWFSAAA. Asn23 is a glycosylation site (N-linked (GlcNAc...) asparagine). Position 90 (Tyr90) interacts with substrate. An N-linked (GlcNAc...) asparagine glycan is attached at Asn100. Residues Asn135, Ala136, and Glu137 each contribute to the substrate site. The N-linked (GlcNAc...) asparagine glycan is linked to Asn172. A substrate-binding site is contributed by Asn195. Glu196 acts as the Proton donor in catalysis. N-linked (GlcNAc...) asparagine glycosylation is present at Asn211. Tyr265 is a substrate binding site. Cysteines 271 and 324 form a disulfide. The Nucleophile role is filled by Glu308. A substrate-binding site is contributed by Tyr373. N-linked (GlcNAc...) asparagine glycans are attached at residues Asn411, Asn441, Asn456, Asn554, Asn679, Asn735, Asn775, Asn821, and Asn878.

This sequence belongs to the glycosyl hydrolase 35 family.

The protein resides in the secreted. It carries out the reaction Hydrolysis of terminal non-reducing beta-D-galactose residues in beta-D-galactosides.. Its function is as follows. Cleaves beta-linked terminal galactosyl residues from gangliosides, glycoproteins, and glycosaminoglycans. This is Probable beta-galactosidase B (lacB) from Neosartorya fischeri (strain ATCC 1020 / DSM 3700 / CBS 544.65 / FGSC A1164 / JCM 1740 / NRRL 181 / WB 181) (Aspergillus fischerianus).